The chain runs to 330 residues: Ketol-acid reductoisomerase (NADP(+)) (330 aa).

Residues Val-2–Thr-182 form the KARI N-terminal Rossmann domain. Residues Tyr-25–Gln-28, Ser-51, and Ser-53 contribute to the NADP(+) site. Residue His-108 is part of the active site. Gly-134 is a binding site for NADP(+). One can recognise a KARI C-terminal knotted domain in the interval Thr-183–Ile-328. Asp-191, Glu-195, Glu-227, and Glu-231 together coordinate Mg(2+). Substrate is bound at residue Ser-252.

Belongs to the ketol-acid reductoisomerase family. The cofactor is Mg(2+).

The enzyme catalyses (2R)-2,3-dihydroxy-3-methylbutanoate + NADP(+) = (2S)-2-acetolactate + NADPH + H(+). It carries out the reaction (2R,3R)-2,3-dihydroxy-3-methylpentanoate + NADP(+) = (S)-2-ethyl-2-hydroxy-3-oxobutanoate + NADPH + H(+). Its pathway is amino-acid biosynthesis; L-isoleucine biosynthesis; L-isoleucine from 2-oxobutanoate: step 2/4. It participates in amino-acid biosynthesis; L-valine biosynthesis; L-valine from pyruvate: step 2/4. Its function is as follows. Involved in the biosynthesis of branched-chain amino acids (BCAA). Catalyzes an alkyl-migration followed by a ketol-acid reduction of (S)-2-acetolactate (S2AL) to yield (R)-2,3-dihydroxy-isovalerate. In the isomerase reaction, S2AL is rearranged via a Mg-dependent methyl migration to produce 3-hydroxy-3-methyl-2-ketobutyrate (HMKB). In the reductase reaction, this 2-ketoacid undergoes a metal-dependent reduction by NADPH to yield (R)-2,3-dihydroxy-isovalerate. This Frankia alni (strain DSM 45986 / CECT 9034 / ACN14a) protein is Ketol-acid reductoisomerase (NADP(+)).